The chain runs to 499 residues: NADH-quinone oxidoreductase subunit 14 (499 aa).

14 helical membrane passes run 9–29 (ILPE…GAYL), 37–57 (TLLW…GLGN), 76–96 (FAKV…ADYM), 104–124 (FEFP…VSAG), 126–146 (LLTL…VAAM), 161–181 (FVLG…VYGF), 196–216 (AGHL…GLSF), 235–255 (PTPV…ALIA), 269–289 (WSQI…IAGI), 301–321 (SSIA…AIGV), 324–344 (MLLY…FILS), 369–389 (ALAM…LGFF), 402–422 (GMGW…FYYL), and 446–466 (YLAL…MFGV).

It belongs to the complex I subunit 2 family. In terms of assembly, NDH-1 is composed of at least 14 different subunits, Nqo1 to Nqo14. The complex has a L-shaped structure, with the hydrophobic arm (subunits Nqo7, Nqo8, Nqo10 to Nqo14) embedded in the inner membrane and the hydrophilic peripheral arm (subunits Nqo1 to Nqo6, Nqo9) protruding into the bacterial cytoplasm. The hydrophilic domain contains all the redox centers.

It localises to the cell inner membrane. It carries out the reaction a quinone + NADH + 5 H(+)(in) = a quinol + NAD(+) + 4 H(+)(out). Functionally, NDH-1 shuttles electrons from NADH, via FMN and iron-sulfur (Fe-S) centers, to quinones in the respiratory chain. The immediate electron acceptor for the enzyme in this species is believed to be ubiquinone. Couples the redox reaction to proton translocation (for every two electrons transferred, four hydrogen ions are translocated across the cytoplasmic membrane), and thus conserves the redox energy in a proton gradient. The chain is NADH-quinone oxidoreductase subunit 14 from Paracoccus denitrificans.